Consider the following 44-residue polypeptide: Benzaldehyde dehydrogenase [NAD(+)] II (44 aa).

This sequence belongs to the aldehyde dehydrogenase family.

The catalysed reaction is benzaldehyde + NAD(+) + H2O = benzoate + NADH + 2 H(+). The sequence is that of Benzaldehyde dehydrogenase [NAD(+)] II from Acinetobacter guillouiae (Acinetobacter genomosp. 11).